A 222-amino-acid chain; its full sequence is uncharacterized protein (222 aa).

The disordered stretch occupies residues 142–222 (ARRGGCVHPP…LPDPPSAGHL (81 aa)). Low complexity predominate over residues 160–169 (QSRSISSRRA). A compositionally biased stretch (basic residues) spans 182–196 (PRRRPHRHRTRPQTR).

The protein belongs to the Rv1128c/1148c/1588c/1702c/1945/3466 family.

This is an uncharacterized protein from Mycobacterium tuberculosis (strain ATCC 25618 / H37Rv).